A 434-amino-acid chain; its full sequence is Isocitrate lyase (434 aa).

Residue 91–93 participates in substrate binding; the sequence is SGW. Asp-157 provides a ligand contact to Mg(2+). Catalysis depends on Cys-195, which acts as the Proton acceptor. Substrate is bound by residues 196-197, Arg-232, 317-321, and Thr-351; these read GH and NCSPS.

The protein belongs to the isocitrate lyase/PEP mutase superfamily. Isocitrate lyase family. Homotetramer. Mg(2+) serves as cofactor.

The catalysed reaction is D-threo-isocitrate = glyoxylate + succinate. It participates in carbohydrate metabolism; glyoxylate cycle; (S)-malate from isocitrate: step 1/2. Involved in the metabolic adaptation in response to environmental changes. Catalyzes the reversible formation of succinate and glyoxylate from isocitrate, a key step of the glyoxylate cycle, which operates as an anaplerotic route for replenishing the tricarboxylic acid cycle during growth on fatty acid substrates. This Escherichia coli O6:H1 (strain CFT073 / ATCC 700928 / UPEC) protein is Isocitrate lyase (aceA).